The chain runs to 153 residues: MMSSASAMKAVGFLLLLTILTLAYAKKSGDVTELQIGVKYKPQKCDLQAHKGDKIKVHYRGKLTDGTVFDSSFERGDPIEFELGTGQVIPGWDQGLLGACVGEKRKLKIPSKLGYGDNGSPPKIPGGATLIFDTELVAVNGEPSSEAKSKNEL.

The signal sequence occupies residues 1–25 (MMSSASAMKAVGFLLLLTILTLAYA). In terms of domain architecture, PPIase FKBP-type spans 52-140 (GDKIKVHYRG…IFDTELVAVN (89 aa)). A Prevents secretion from ER motif is present at residues 150–153 (KNEL).

It belongs to the FKBP-type PPIase family.

Its subcellular location is the endoplasmic reticulum lumen. It carries out the reaction [protein]-peptidylproline (omega=180) = [protein]-peptidylproline (omega=0). Functionally, PPIases accelerate the folding of proteins. It catalyzes the cis-trans isomerization of proline imidic peptide bonds in oligopeptides. This Arabidopsis thaliana (Mouse-ear cress) protein is Peptidyl-prolyl cis-trans isomerase FKBP15-1 (FKBP15-1).